The chain runs to 131 residues: Conotoxin Cal8.1 (131 aa).

An N-terminal signal peptide occupies residues methionine 1–alanine 19. Residues aspartate 20–arginine 38 constitute a propeptide that is removed on maturation.

Post-translationally, contains 4 disulfide bonds. Expressed by the venom duct.

The protein resides in the secreted. Probable neurotoxin with unknown target. Possibly targets ion channels. This is Conotoxin Cal8.1 from Californiconus californicus (California cone).